Here is a 230-residue protein sequence, read N- to C-terminus: Large ribosomal subunit protein uL1 (230 aa).

Belongs to the universal ribosomal protein uL1 family. In terms of assembly, part of the 50S ribosomal subunit.

In terms of biological role, binds directly to 23S rRNA. The L1 stalk is quite mobile in the ribosome, and is involved in E site tRNA release. Protein L1 is also a translational repressor protein, it controls the translation of the L11 operon by binding to its mRNA. The sequence is that of Large ribosomal subunit protein uL1 from Leuconostoc mesenteroides subsp. mesenteroides (strain ATCC 8293 / DSM 20343 / BCRC 11652 / CCM 1803 / JCM 6124 / NCDO 523 / NBRC 100496 / NCIMB 8023 / NCTC 12954 / NRRL B-1118 / 37Y).